A 266-amino-acid polypeptide reads, in one-letter code: Putative carbamate hydrolase RutD (266 aa).

The protein belongs to the AB hydrolase superfamily. Hydrolase RutD family.

The enzyme catalyses carbamate + 2 H(+) = NH4(+) + CO2. Functionally, involved in pyrimidine catabolism. May facilitate the hydrolysis of carbamate, a reaction that can also occur spontaneously. The sequence is that of Putative carbamate hydrolase RutD from Escherichia coli O103:H2 (strain 12009 / EHEC).